Here is a 400-residue protein sequence, read N- to C-terminus: Acetate kinase (400 aa).

Asn-10 is a binding site for Mg(2+). An ATP-binding site is contributed by Lys-17. Arg-91 contributes to the substrate binding site. The active-site Proton donor/acceptor is Asp-148. ATP-binding positions include 208 to 212 (HLGNG), 283 to 285 (DCR), and 331 to 335 (GIGEN). Residue Glu-385 participates in Mg(2+) binding.

It belongs to the acetokinase family. In terms of assembly, homodimer. The cofactor is Mg(2+). It depends on Mn(2+) as a cofactor.

Its subcellular location is the cytoplasm. It catalyses the reaction acetate + ATP = acetyl phosphate + ADP. Its pathway is metabolic intermediate biosynthesis; acetyl-CoA biosynthesis; acetyl-CoA from acetate: step 1/2. Functionally, catalyzes the formation of acetyl phosphate from acetate and ATP. Can also catalyze the reverse reaction. This is Acetate kinase from Shewanella frigidimarina (strain NCIMB 400).